The primary structure comprises 353 residues: Putative glycosyltransferase TagX (353 aa).

This sequence belongs to the glycosyltransferase 2 family.

This Staphylococcus aureus (strain MRSA252) protein is Putative glycosyltransferase TagX (tagX).